The chain runs to 166 residues: Desiccation-related protein At2g46140 (166 aa).

It belongs to the LEA type 2 family.

In Arabidopsis thaliana (Mouse-ear cress), this protein is Desiccation-related protein At2g46140.